Reading from the N-terminus, the 560-residue chain is Vesicular glutamate transporter 1 (560 aa).

The Cytoplasmic portion of the chain corresponds to 1–63; that stretch reads MEFRQEEFRK…CTCFGLPRRY (63 aa). The chain crosses the membrane as a helical span at residues 64–84; the sequence is IIAIMSGLGFCISFGIRCNLG. Over 85–116 the chain is Extracellular; sequence VAIVSMVNNSTTHRGGHVVMQKAQFNWDPETV. A helical transmembrane segment spans residues 117–137; sequence GLIHGSFFWGYIVTQIPGGFI. Residues 138–140 lie on the Cytoplasmic side of the membrane; that stretch reads CQK. The helical transmembrane segment at 141–161 threads the bilayer; sequence FAANRVFGFAIVATSTLNMLI. The Extracellular portion of the chain corresponds to 162-169; sequence PSAARVHY. Residues 170–190 form a helical membrane-spanning segment; that stretch reads GCVIFVRILQGLVEGVTYPAC. Over 191 to 208 the chain is Cytoplasmic; sequence HGIWSKWAPPLERSRLAT. A helical membrane pass occupies residues 209 to 229; sequence TAFCGSYAGAVVAMPLAGVLV. At 230-236 the chain is on the extracellular side; it reads QYSGWSS. A helical membrane pass occupies residues 237-257; sequence VFYVYGSFGIFWYLFWLLVSY. Over 258-302 the chain is Cytoplasmic; it reads ESPALHPSISEEERKYIEDAIGESAKLMNPVTKFNTPWRRFFTSM. A helical transmembrane segment spans residues 303–323; it reads PVYAIIVANFCRSWTFYLLLI. Over 324–341 the chain is Extracellular; that stretch reads SQPAYFEEVFGFEISKVG. The helical transmembrane segment at 342-362 threads the bilayer; that stretch reads LVSALPHLVMTIIVPIGGQIA. Over 363–378 the chain is Cytoplasmic; sequence DFLRSRRIMSTTNVRK. The chain crosses the membrane as a helical span at residues 379 to 399; the sequence is LMNCGGFGMEATLLLVVGYSH. Residues 400 to 401 lie on the Extracellular side of the membrane; sequence SK. The chain crosses the membrane as a helical span at residues 402-422; it reads GVAISFLVLAVGFSGFAISGF. At 423-435 the chain is on the cytoplasmic side; sequence NVNHLDIAPRYAS. A helical transmembrane segment spans residues 436-456; that stretch reads ILMGISNGVGTLSGMVCPIIV. Over 457–469 the chain is Extracellular; it reads GAMTKHKTREEWQ. Residues 470-490 traverse the membrane as a helical segment; that stretch reads YVFLIASLVHYGGVIFYGVFA. Residues 491–560 lie on the Cytoplasmic side of the membrane; sequence SGEKQPWAEP…PRPPPPVRDY (70 aa). The interval 497–560 is disordered; that stretch reads WAEPEEMSEE…PRPPPPVRDY (64 aa). Serine 504 is subject to Phosphoserine. Over residues 520 to 529 the composition is skewed to acidic residues; that stretch reads DESEMEDEAE. Pro residues-rich tracts occupy residues 531 to 540 and 550 to 560; these read PGAPPAPPPS and PPRPPPPVRDY.

The protein belongs to the major facilitator superfamily. Sodium/anion cotransporter family. VGLUT subfamily. As to quaternary structure, interacts with SHANK3.

It is found in the cytoplasmic vesicle. Its subcellular location is the secretory vesicle. The protein resides in the synaptic vesicle membrane. It localises to the cell membrane. The protein localises to the synapse. It is found in the synaptosome. The catalysed reaction is L-glutamate(out) = L-glutamate(in). It carries out the reaction chloride(in) = chloride(out). It catalyses the reaction 3 Na(+)(out) + phosphate(out) = 3 Na(+)(in) + phosphate(in). The enzyme catalyses phosphate(in) = phosphate(out). The catalysed reaction is K(+)(in) + H(+)(out) = K(+)(out) + H(+)(in). Its activity is regulated as follows. Chloride channel activity is allosterically activated by lumenal H(+) and Cl(-) leading to synaptic vesicles acidification. The L-glutamate transport activity is allosterically activated by lumenal H(+) and Cl(-). The allosteric activation by H(+) efficiently prevents non-vesicular efflux across the plasma membrane, thereby restricting L-glutamate transport activity to acidic membranes such as synaptic vesicles. Functionally, multifunctional transporter that transports L-glutamate as well as multiple ions such as chloride, proton, potassium, sodium and phosphate. At the synaptic vesicle membrane, mainly functions as an uniporter which transports preferentially L-glutamate but also phosphate from the cytoplasm into synaptic vesicles at presynaptic nerve terminals of excitatory neural cells. The L-glutamate or phosphate uniporter activity is electrogenic and is driven by the proton electrochemical gradient, mainly by the electrical gradient established by the vacuolar H(+)-ATPase across the synaptic vesicle membrane. In addition, functions as a chloride channel that allows a chloride permeation through the synaptic vesicle membrane that affects the proton electrochemical gradient and promotes synaptic vesicles acidification. Moreover, may function as a K(+)/H(+) antiport allowing to maintain the electrical gradient and to decrease chemical gradient and therefore sustain vesicular glutamate uptake. The vesicular K(+)/H(+) antiport activity is electroneutral. At the plasma membrane, following exocytosis, functions as a symporter of Na(+) and phosphate from the extracellular space to the cytoplasm allowing synaptic phosphate homeostasis regulation. The symporter activity is driven by an inside negative membrane potential and is electrogenic. Is necessary for synaptic signaling of visual-evoked responses from photoreceptors. In Bos taurus (Bovine), this protein is Vesicular glutamate transporter 1.